We begin with the raw amino-acid sequence, 686 residues long: DNA topoisomerase 1 (686 aa).

The 141-residue stretch at 1–141 folds into the Toprim domain; the sequence is MILIIAEKPN…KRMKFSALTK (141 aa). Residues Glu-7 and Asp-107 each contribute to the Mg(2+) site. Residues 156 to 574 enclose the Topo IA-type catalytic domain; sequence NFGMANAGIA…EAKERLTKIL (419 aa). Residues 196–201 are interaction with DNA; it reads STGRVQ. Residue Tyr-317 is the O-(5'-phospho-DNA)-tyrosine intermediate of the active site. A C4-type 1 zinc finger spans residues 606–634; sequence CPKCGGDLIVKYNKKTGKRFVGCSNWPKC. A C4-type 2; atypical zinc finger spans residues 653–678; that stretch reads CCNGAPVVIIREEDGREFEICLDINC.

The protein belongs to the type IA topoisomerase family. Monomer. It depends on Mg(2+) as a cofactor.

It catalyses the reaction ATP-independent breakage of single-stranded DNA, followed by passage and rejoining.. Releases the supercoiling and torsional tension of DNA, which is introduced during the DNA replication and transcription, by transiently cleaving and rejoining one strand of the DNA duplex. Introduces a single-strand break via transesterification at a target site in duplex DNA. The scissile phosphodiester is attacked by the catalytic tyrosine of the enzyme, resulting in the formation of a DNA-(5'-phosphotyrosyl)-enzyme intermediate and the expulsion of a 3'-OH DNA strand. The free DNA strand then undergoes passage around the unbroken strand, thus removing DNA supercoils. Finally, in the religation step, the DNA 3'-OH attacks the covalent intermediate to expel the active-site tyrosine and restore the DNA phosphodiester backbone. This chain is DNA topoisomerase 1, found in Pyrococcus horikoshii (strain ATCC 700860 / DSM 12428 / JCM 9974 / NBRC 100139 / OT-3).